The sequence spans 139 residues: Nucleoside diphosphate kinase (139 aa).

The ATP site is built by lysine 11, phenylalanine 59, arginine 87, threonine 93, arginine 104, and asparagine 114. Histidine 117 functions as the Pros-phosphohistidine intermediate in the catalytic mechanism.

It belongs to the NDK family. As to quaternary structure, homotetramer. Mg(2+) serves as cofactor.

Its subcellular location is the cytoplasm. It catalyses the reaction a 2'-deoxyribonucleoside 5'-diphosphate + ATP = a 2'-deoxyribonucleoside 5'-triphosphate + ADP. It carries out the reaction a ribonucleoside 5'-diphosphate + ATP = a ribonucleoside 5'-triphosphate + ADP. Its function is as follows. Major role in the synthesis of nucleoside triphosphates other than ATP. The ATP gamma phosphate is transferred to the NDP beta phosphate via a ping-pong mechanism, using a phosphorylated active-site intermediate. The chain is Nucleoside diphosphate kinase from Wolbachia pipientis subsp. Culex pipiens (strain wPip).